Reading from the N-terminus, the 299-residue chain is Ribonuclease H2 subunit A (299 aa).

M1 is modified (N-acetylmethionine). The region spanning P28 to E250 is the RNase H type-2 domain. A divalent metal cation contacts are provided by D34, E35, and D141. 2 positions are modified to phosphothreonine: T204 and T216. S257 and S277 each carry phosphoserine.

The protein belongs to the RNase HII family. Eukaryotic subfamily. In terms of assembly, the RNase H2 complex is a heterotrimer composed of the catalytic subunit RNASEH2A and the non-catalytic subunits RNASEH2B and RNASEH2C. Mn(2+) is required as a cofactor. Requires Mg(2+) as cofactor.

The protein resides in the nucleus. The enzyme catalyses Endonucleolytic cleavage to 5'-phosphomonoester.. Its function is as follows. Catalytic subunit of RNase HII, an endonuclease that specifically degrades the RNA of RNA:DNA hybrids. Participates in DNA replication, possibly by mediating the removal of lagging-strand Okazaki fragment RNA primers during DNA replication. Mediates the excision of single ribonucleotides from DNA:RNA duplexes. This chain is Ribonuclease H2 subunit A (RNASEH2A), found in Homo sapiens (Human).